The primary structure comprises 644 residues: Acetyl-coenzyme A synthetase (644 aa).

CoA is bound by residues 189-192 and T307; that span reads RGGK. ATP contacts are provided by residues 383 to 385, 407 to 412, D496, and R511; these read GEP and DTWWQT. S519 contributes to the CoA binding site. R522 is a binding site for ATP. Mg(2+)-binding residues include V533, H535, and V538. R580 provides a ligand contact to CoA. An N6-acetyllysine modification is found at K605.

Belongs to the ATP-dependent AMP-binding enzyme family. It depends on Mg(2+) as a cofactor. In terms of processing, acetylated. Deacetylation by the SIR2-homolog deacetylase activates the enzyme.

The catalysed reaction is acetate + ATP + CoA = acetyl-CoA + AMP + diphosphate. Functionally, catalyzes the conversion of acetate into acetyl-CoA (AcCoA), an essential intermediate at the junction of anabolic and catabolic pathways. AcsA undergoes a two-step reaction. In the first half reaction, AcsA combines acetate with ATP to form acetyl-adenylate (AcAMP) intermediate. In the second half reaction, it can then transfer the acetyl group from AcAMP to the sulfhydryl group of CoA, forming the product AcCoA. The chain is Acetyl-coenzyme A synthetase from Rubrobacter xylanophilus (strain DSM 9941 / JCM 11954 / NBRC 16129 / PRD-1).